Reading from the N-terminus, the 75-residue chain is uncharacterized protein (75 aa).

This is an uncharacterized protein from Bacillus subtilis (strain 168).